We begin with the raw amino-acid sequence, 1533 residues long: MYSNSNAFLGGANSLRPGQQPQQQQQQYGAPSPFGQQGPMQPQPTGFAPQPTGFAPQPTGFGQQQTGYGQQQQQPLQQQFTGYPGLQAPQQQPQLQQQFTGFQPQATGFQPQVTGFQPQATGFQPQAPQQQPFQTGMPPVPAIPQQFQQQQSFQQQQQQQQQPSIQQPQPTGFPSVQIQAPAQQPAPTAQGGIAPPPPVKPQATGFSEMAASFQTAGGKGRRAEQKTNTVKIPNIRLSFITAHDQARFETLFKSAVGEGQTTMSGEKARDLLLRSKLDGDSLSQIWTLADTTRSGQLHFPEFALAMYLCNLKITGKALPSVLPDHIKNEVSSMVDIINFSITDDAGSSSAPASNAPSFATQQNTAAVPTIQQPQPQPSNSAILQAQMTGFPAQQTGFMGQNQGLQPQQTGFPGMNPQPTGYAGPMPPMPPMPTGFGSNLSPNAGPGGMVAPLNSQPTGMPGQWGLVNTPATGLPLIDALQARMMPQLGREQRNYTTAGLQGNAVIPWAITKDEKTRYDALFRAWDGLNKGFIAGDAAIEIFGQSGLDKPDLERIWTLADNGNKGRLDLDEFAVAMHLIYRKLNGYPIPNQLPPELVPPSARNLSASIGMVKNMLHQESELRKNTGASLLPQKTGVSYLKGHSFKNTGANRKDATVFKNNDEEVGYRSSARRRVGTSPRPESPAASNSGDDLTIEQLRKKIKEKQVLLDAMDFNDEKNMEEDDILDRRDRREADELYRRIRRIQEDIDNHPDAQLMSADSDAERRALKRQLQQLTDRIPELASQVRKTEKAIADARLELFRLKDAKAHPNSAAAIVGTGPGGMVTESDRIKARAKAMMQQRTAALMGKKIDIGDDDADGPKRLEEENIKIKTEKENNERMVRDVEDSVREFAKGIEDSLKEGAPDSTSEHEKRRWEDALGVEDEVRDFIFDLQRESRAARIRSQDRQGGRKATQEPVKAEAPVSTRVETPSPSISRTSTPASTAGGGSYSSYKTPEERAAFIKQQAEQRMAERLAALGLKAPGKPGETAAQRAERERAERAEKRRQAEEEDARREAERQAKLAEEEGGPAPVASPKADSRPPPPPPSRKAGKADDRRDEEAAAKKAEEERLEREREEQERETRELEESAKAQEDELAKERAEADARLKALEEQVRLGKLKKEEEKRKKKAAMAEAKEKEAQLAARRAEIEAARKREEELRKQLEAIDDEDSSSSDEEGPEQITPQASTPTVGGSQVGTHEQEPNSPPPPAPASVASPPQIVTTSPNAERESRNPYFKMMSQSSEASTSSVAAPVASPPPPADVSTNPFHRMTQAAAAPAAAVSSAVSGAVSGISDAISGVMPSRRRPNDDDDDDWGSEKGSDDEDSDDEGRPGGNSAAALASILFGTMAPPRPLSATGEKPTASTPPVVSSPSSPPPPPAPVEPSAGSPPPPPPPPPGPPPAPSGGAPPPPPPPPPMPESGAPAAPPPPPPPGPPPAPGAVPPPPPPPPGGAPAPSLPAGRPAGLLGEIQAGRALKKTQTKDKSQAAVAGRVLD.

The segment at Met-1 to Thr-204 is disordered. Composition is skewed to low complexity over residues Gln-19–Gly-46, Gly-53–Gly-136, Ile-143–Pro-170, and Gln-177–Ile-193. The EH 1 domain occupies Asp-244–Met-333. The 36-residue stretch at Leu-277–Lys-312 folds into the EF-hand 1 domain. Residues Ala-345–Ala-359 are compositionally biased toward low complexity. 2 disordered regions span residues Ala-345–Ser-378 and Gln-393–Gly-423. 2 stretches are compositionally biased toward polar residues: residues Thr-360–Ser-378 and Gln-393–Gly-410. Residues Glu-513–Asn-602 enclose the EH 2 domain. One can recognise an EF-hand 2 domain in the interval Leu-546 to Lys-581. A compositionally biased stretch (basic and acidic residues) spans Asn-649–Gly-664. Disordered regions lie at residues Asn-649 to Leu-691, Ile-894 to Ala-917, Ser-935 to Pro-1306, and Asp-1334 to Asp-1533. Positions Asp-690–Phe-890 form a coiled coil. 2 stretches are compositionally biased toward basic and acidic residues: residues Ile-894–Asp-916 and Ser-935–Gly-947. A compositionally biased stretch (low complexity) spans Thr-968–Thr-982. Positions Glu-1026–Asp-1209 form a coiled coil. Composition is skewed to basic and acidic residues over residues Arg-1031–Glu-1063, Gly-1090–Lys-1164, and Glu-1173–Glu-1203. Residues Ala-1204 to Pro-1218 show a composition bias toward acidic residues. Polar residues predominate over residues Ile-1221 to Thr-1237. Positions Ser-1279–Val-1293 are enriched in low complexity. Residues Asp-1348–Asp-1367 are compositionally biased toward acidic residues. Over residues Ser-1412 to Ser-1495 the composition is skewed to pro residues. Residues Arg-1500–Thr-1517 form the WH2 domain.

Belongs to the PAN1 family. As to quaternary structure, component of the PAN1 actin cytoskeleton-regulatory complex.

The protein resides in the cell membrane. Its subcellular location is the endosome membrane. It localises to the cytoplasm. It is found in the cytoskeleton. The protein localises to the actin patch. Its function is as follows. Component of the PAN1 actin cytoskeleton-regulatory complex required for the internalization of endosomes during actin-coupled endocytosis. The complex links the site of endocytosis to the cell membrane-associated actin cytoskeleton. Mediates uptake of external molecules and vacuolar degradation of plasma membrane proteins. Plays a role in the proper organization of the cell membrane-associated actin cytoskeleton and promotes its destabilization. The chain is Actin cytoskeleton-regulatory complex protein pan-1 (pan-1) from Neurospora crassa (strain ATCC 24698 / 74-OR23-1A / CBS 708.71 / DSM 1257 / FGSC 987).